A 302-amino-acid chain; its full sequence is Dehydrodolichyl diphosphate synthase 3 (302 aa).

The protein belongs to the UPP synthase family. The cofactor is Mg(2+).

The protein operates within protein modification; protein glycosylation. Its function is as follows. Catalyzes cis-prenyl chain elongation to produce the polyprenyl backbone of dolichol, a glycosyl carrier-lipid required for the biosynthesis of several classes of glycoprotein. This is Dehydrodolichyl diphosphate synthase 3 from Arabidopsis thaliana (Mouse-ear cress).